A 422-amino-acid chain; its full sequence is UDP-N-acetylglucosamine 1-carboxyvinyltransferase (422 aa).

22 to 23 (KN) contacts phosphoenolpyruvate. UDP-N-acetyl-alpha-D-glucosamine is bound at residue Arg95. The active-site Proton donor is the Cys119. Cys119 is subject to 2-(S-cysteinyl)pyruvic acid O-phosphothioketal. UDP-N-acetyl-alpha-D-glucosamine contacts are provided by residues 124–128 (RPIDQ), Asp309, and Val331.

Belongs to the EPSP synthase family. MurA subfamily.

The protein localises to the cytoplasm. The enzyme catalyses phosphoenolpyruvate + UDP-N-acetyl-alpha-D-glucosamine = UDP-N-acetyl-3-O-(1-carboxyvinyl)-alpha-D-glucosamine + phosphate. It functions in the pathway cell wall biogenesis; peptidoglycan biosynthesis. Cell wall formation. Adds enolpyruvyl to UDP-N-acetylglucosamine. In Anaeromyxobacter dehalogenans (strain 2CP-C), this protein is UDP-N-acetylglucosamine 1-carboxyvinyltransferase.